A 485-amino-acid polypeptide reads, in one-letter code: Glutamyl-tRNA(Gln) amidotransferase subunit A (485 aa).

Catalysis depends on charge relay system residues K79 and S154. S178 serves as the catalytic Acyl-ester intermediate.

It belongs to the amidase family. GatA subfamily. As to quaternary structure, heterotrimer of A, B and C subunits.

The catalysed reaction is L-glutamyl-tRNA(Gln) + L-glutamine + ATP + H2O = L-glutaminyl-tRNA(Gln) + L-glutamate + ADP + phosphate + H(+). Functionally, allows the formation of correctly charged Gln-tRNA(Gln) through the transamidation of misacylated Glu-tRNA(Gln) in organisms which lack glutaminyl-tRNA synthetase. The reaction takes place in the presence of glutamine and ATP through an activated gamma-phospho-Glu-tRNA(Gln). The polypeptide is Glutamyl-tRNA(Gln) amidotransferase subunit A (Staphylococcus aureus (strain MRSA252)).